A 174-amino-acid polypeptide reads, in one-letter code: FMN reductase (NADH) RutF (174 aa).

This sequence belongs to the non-flavoprotein flavin reductase family. RutF subfamily.

It catalyses the reaction FMNH2 + NAD(+) = FMN + NADH + 2 H(+). Its function is as follows. Catalyzes the reduction of FMN to FMNH2 which is used to reduce pyrimidine by RutA via the Rut pathway. The protein is FMN reductase (NADH) RutF of Agrobacterium fabrum (strain C58 / ATCC 33970) (Agrobacterium tumefaciens (strain C58)).